We begin with the raw amino-acid sequence, 1325 residues long: Cellulose synthase 1 operon protein C (1325 aa).

Residues 1–30 (MNRRYVFSLSAGLLASSCMGAIMPVPVARA) form the signal peptide. 8 TPR repeats span residues 50–83 (RQIL…APDA), 85–117 (DVLE…APGS), 292–325 (AGLA…NSHD), 326–359 (ADSL…DPKT), 406–439 (TGAT…DPNN), 558–591 (NDAA…KEDL), 702–735 (MGIA…DPEA), and 737–769 (SPKL…NPQD). The interval 838 to 886 (VEGSRSASGPAATEEDALAPPSSNPFRHHGYGRQTELGAPVTGGSYSME) is disordered.

The protein belongs to the AcsC/BcsC family.

It is found in the cell outer membrane. It participates in glycan metabolism; bacterial cellulose biosynthesis. Required for maximal bacterial cellulose synthesis. It may be involved in the formation of a membrane complex for extrusion of the cellulose product. The polypeptide is Cellulose synthase 1 operon protein C (bcsCI) (Komagataeibacter xylinus (Gluconacetobacter xylinus)).